A 37-amino-acid polypeptide reads, in one-letter code: Esculentin-2JDb (37 aa).

A disulfide bridge connects residues Cys-31 and Cys-37.

In terms of tissue distribution, expressed by the skin glands.

The protein localises to the secreted. Has antibacterial activity against E.coli and S.aureus strains. In Odorrana jingdongensis (Jingdong frog), this protein is Esculentin-2JDb.